Consider the following 466-residue polypeptide: Ribulose bisphosphate carboxylase large chain (466 aa).

The residue at position 4 (lysine 4) is an N6,N6,N6-trimethyllysine. The substrate site is built by asparagine 113 and threonine 163. Lysine 165 (proton acceptor) is an active-site residue. Lysine 167 contacts substrate. Mg(2+) contacts are provided by lysine 191, aspartate 193, and glutamate 194. Residue lysine 191 is modified to N6-carboxylysine. The active-site Proton acceptor is histidine 284. Substrate-binding residues include arginine 285, histidine 317, and serine 369.

Belongs to the RuBisCO large chain family. Type I subfamily. Heterohexadecamer of 8 large chains and 8 small chains; disulfide-linked. The disulfide link is formed within the large subunit homodimers. Requires Mg(2+) as cofactor. In terms of processing, the disulfide bond which can form in the large chain dimeric partners within the hexadecamer appears to be associated with oxidative stress and protein turnover.

Its subcellular location is the plastid. The protein localises to the chloroplast. The catalysed reaction is 2 (2R)-3-phosphoglycerate + 2 H(+) = D-ribulose 1,5-bisphosphate + CO2 + H2O. The enzyme catalyses D-ribulose 1,5-bisphosphate + O2 = 2-phosphoglycolate + (2R)-3-phosphoglycerate + 2 H(+). Functionally, ruBisCO catalyzes two reactions: the carboxylation of D-ribulose 1,5-bisphosphate, the primary event in carbon dioxide fixation, as well as the oxidative fragmentation of the pentose substrate in the photorespiration process. Both reactions occur simultaneously and in competition at the same active site. The polypeptide is Ribulose bisphosphate carboxylase large chain (Drimys winteri (Winter's bark)).